Here is a 1479-residue protein sequence, read N- to C-terminus: Tyrosine-protein kinase BAZ1B (1479 aa).

The WAC domain occupies 20 to 126 (EPLFTIPHTQ…GEECDFEVGK (107 aa)). A disordered region spans residues 146 to 212 (EAVEKKSDGA…TSLKKGERKW (67 aa)). Composition is skewed to basic and acidic residues over residues 148 to 165 (VEKK…DKEN) and 173 to 195 (LQKK…DRAR). Phosphoserine is present on residues Ser152, Ser158, and Ser161. A C motif motif is present at residues 207-213 (KGERKWA). Thr266 carries the post-translational modification Phosphothreonine. The interval 302-333 (NPSTKRRNTGSPDRKPSKKPKRDSSSLSSPLN) is disordered. Ser325, Ser330, Ser345, Ser361, and Ser374 each carry phosphoserine. Disordered regions lie at residues 376-433 (NNNK…KTPK) and 448-472 (TQKM…HKHL). The span at 381–396 (HSFHIPKKGPAAKKPG) shows a compositional bias: basic residues. Residues 415–425 (GQKSTGNSKSP) show a composition bias toward polar residues. Residues 454 to 465 (TPRSSGGVPRSS) are compositionally biased toward low complexity. Residues 537–587 (ASMSEEQRKEYLKKKRQELKERLREKAKERREREMLERLEKQKRFEDQELG) adopt a coiled-coil conformation. The DDT domain maps to 605–669 (NTLFGDVALV…LQTLLQDEIA (65 aa)). Phosphoserine is present on residues Ser706, Ser709, and Ser717. Positions 774 to 809 (SAELWKERLAVLKEENDKKRAEKQKRKEMEARNKEN) form a coiled coil. Positions 789 to 813 (NDKKRAEKQKRKEMEARNKENGKEE) are disordered. A Glycyl lysine isopeptide (Lys-Gly) (interchain with G-Cter in SUMO1); alternate cross-link involves residue Lys827. A Glycyl lysine isopeptide (Lys-Gly) (interchain with G-Cter in SUMO2); alternate cross-link involves residue Lys827. Residues Lys854, Lys1043, Lys1089, and Lys1107 each participate in a glycyl lysine isopeptide (Lys-Gly) (interchain with G-Cter in SUMO2) cross-link. Residues 854–890 (KRKREIQERETKVRLEREAEEERMRKHKAAAEKAFQE) adopt a coiled-coil conformation. The PHD-type zinc-finger motif lies at 1184 to 1234 (NARCKVCRKKGEDDKLILCDECNKAFHLFCLRPALYEVPDGEWQCPACQPP). The tract at residues 1231–1324 (CQPPTARRNS…SRPKDDPEVD (94 aa)) is disordered. The span at 1254 to 1277 (SEGDESGEEEEEEEEEEEEEEDYE) shows a compositional bias: acidic residues. A coiled-coil region spans residues 1257–1284 (DESGEEEEEEEEEEEEEEDYEVAGLRLR). A compositionally biased stretch (basic residues) spans 1305-1316 (PGKKSHPARRSR). Ser1315 carries the phosphoserine modification. Residue Lys1331 is modified to N6-acetyllysine. The Bromo domain maps to 1335 to 1439 (RRQSLELQKC…QCLLALLQKH (105 aa)). Residues Ser1338, Ser1464, Ser1466, and Ser1468 each carry the phosphoserine modification. The interval 1451-1479 (RKFPDRLADDEGDSDSESVGQSRGRRQKK) is disordered.

The protein belongs to the WAL family. BAZ1B subfamily. In terms of assembly, component of the WICH-1 ISWI chromatin remodeling complex, at least composed of SMARCA1 and BAZ1B/WSTF, which regulates the spacing of histone octamers on the DNA template to facilitate access to DNA. Within the WICH-1 ISWI chromatin remodeling complex interacts with SMARCA1; the interaction is direct. Component of the WICH-5 ISWI chromatin remodeling complex (also called the WICH complex), at least composed of SMARCA5/SNF2H and BAZ1B/WSTF, which regulates the spacing of histone octamers on the DNA template to facilitate access to DNA. Within the WICH-5 ISWI chromatin remodeling complex interacts with SMARCA5/SNF2H; the interaction is direct. Component of the B-WICH chromatin remodeling complex, at least composed of SMARCA5/SNF2H, BAZ1B/WSTF, SF3B1, DEK, MYO1C, ERCC6, MYBBP1A and DDX21. Within the B-WICH chromatin remodeling complex, interacts with SMARCA5/SNF2H, DDX21, DEK, MYBBP1A, SF3B1 and ERCC6. Interacts with MYO1C. Interacts with PCNA; the interaction is direct and is required for BAZ1B/WSTF binding to replication foci during S phase. Interacts with CDT1. It depends on Mn(2+) as a cofactor.

Its subcellular location is the nucleus. It carries out the reaction L-tyrosyl-[protein] + ATP = O-phospho-L-tyrosyl-[protein] + ADP + H(+). Atypical tyrosine-protein kinase that plays a central role in chromatin remodeling and acts as a transcription regulator. Involved in DNA damage response by phosphorylating 'Tyr-142' of histone H2AX (H2AXY142ph). H2AXY142ph plays a central role in DNA repair and acts as a mark that distinguishes between apoptotic and repair responses to genotoxic stress. Regulatory subunit of the ATP-dependent WICH-1 and WICH-5 ISWI chromatin remodeling complexes, which form ordered nucleosome arrays on chromatin and facilitate access to DNA during DNA-templated processes such as DNA replication, transcription, and repair. Both complexes regulate the spacing of nucleosomes along the chromatin and have the ability to slide mononucleosomes to the center of a DNA template. The WICH-1 ISWI chromatin remodeling complex has a lower ATP hydrolysis rate than the WICH-5 ISWI chromatin remodeling complex. The WICH-5 ISWI chromatin remodeling complex regulates the transcription of various genes, has a role in RNA polymerase I transcription. Within the B-WICH complex has a role in RNA polymerase III transcription. Mediates the recruitment of the WICH-5 ISWI chromatin remodeling complex to replication foci during DNA replication. The polypeptide is Tyrosine-protein kinase BAZ1B (Baz1b) (Mus musculus (Mouse)).